The chain runs to 176 residues: dCTP deaminase (176 aa).

Residues 99 to 104 and aspartate 115 each bind dCTP; that span reads RSTLAR. Glutamate 125 acts as the Proton donor/acceptor in catalysis. A dCTP-binding site is contributed by glutamine 163.

Belongs to the dCTP deaminase family. In terms of assembly, homotrimer.

The enzyme catalyses dCTP + H2O + H(+) = dUTP + NH4(+). It functions in the pathway pyrimidine metabolism; dUMP biosynthesis; dUMP from dCTP (dUTP route): step 1/2. In terms of biological role, catalyzes the deamination of dCTP to dUTP. In Pyrobaculum arsenaticum (strain DSM 13514 / JCM 11321 / PZ6), this protein is dCTP deaminase.